The primary structure comprises 448 residues: C4-dicarboxylate transport protein (448 aa).

Helical transmembrane passes span 9-29, 59-79, 91-111, 159-179, 203-223, 237-257, 312-332, 345-365, and 367-387; these read SLYF…HFYP, LIKM…IAGM, VALL…LLVI, AFAN…GFAL, IVNM…AFTI, LIIC…GTIS, GYSF…IFIA, ITLL…TGSG, and IVMA…LALI.

Belongs to the dicarboxylate/amino acid:cation symporter (DAACS) (TC 2.A.23) family.

It is found in the cell inner membrane. Functionally, responsible for the transport of dicarboxylates such as succinate, fumarate, and malate from the periplasm across the membrane. This chain is C4-dicarboxylate transport protein, found in Acinetobacter baylyi (strain ATCC 33305 / BD413 / ADP1).